Consider the following 218-residue polypeptide: Large ribosomal subunit protein bL25 (218 aa).

The interval 186-218 (AVEEEVPAEDEEIMPEPEVIGEEDEGDEEEPEE) is disordered.

Belongs to the bacterial ribosomal protein bL25 family. CTC subfamily. Part of the 50S ribosomal subunit; part of the 5S rRNA/L5/L18/L25 subcomplex. Contacts the 5S rRNA. Binds to the 5S rRNA independently of L5 and L18.

Functionally, this is one of the proteins that binds to the 5S RNA in the ribosome where it forms part of the central protuberance. The polypeptide is Large ribosomal subunit protein bL25 (Halothermothrix orenii (strain H 168 / OCM 544 / DSM 9562)).